A 287-amino-acid chain; its full sequence is Shikimate dehydrogenase (NADP(+)) (287 aa).

Shikimate is bound by residues S20–S22 and T67. Residue K71 is the Proton acceptor of the active site. E84 is a binding site for NADP(+). N93 and D108 together coordinate shikimate. NADP(+) is bound by residues G132–A136 and M226. Position 228 (Y228) interacts with shikimate. Position 250 (G250) interacts with NADP(+).

The protein belongs to the shikimate dehydrogenase family. Homodimer.

The enzyme catalyses shikimate + NADP(+) = 3-dehydroshikimate + NADPH + H(+). The protein operates within metabolic intermediate biosynthesis; chorismate biosynthesis; chorismate from D-erythrose 4-phosphate and phosphoenolpyruvate: step 4/7. Involved in the biosynthesis of the chorismate, which leads to the biosynthesis of aromatic amino acids. Catalyzes the reversible NADPH linked reduction of 3-dehydroshikimate (DHSA) to yield shikimate (SA). The polypeptide is Shikimate dehydrogenase (NADP(+)) (Bordetella petrii (strain ATCC BAA-461 / DSM 12804 / CCUG 43448)).